A 424-amino-acid chain; its full sequence is Serine--tRNA ligase (424 aa).

230 to 232 (TAE) provides a ligand contact to L-serine. 261-263 (RAE) provides a ligand contact to ATP. An L-serine-binding site is contributed by glutamate 284. ATP is bound at residue 348–351 (EISS). Residue serine 384 coordinates L-serine.

Belongs to the class-II aminoacyl-tRNA synthetase family. Type-1 seryl-tRNA synthetase subfamily. In terms of assembly, homodimer. The tRNA molecule binds across the dimer.

Its subcellular location is the cytoplasm. It catalyses the reaction tRNA(Ser) + L-serine + ATP = L-seryl-tRNA(Ser) + AMP + diphosphate + H(+). The catalysed reaction is tRNA(Sec) + L-serine + ATP = L-seryl-tRNA(Sec) + AMP + diphosphate + H(+). Its pathway is aminoacyl-tRNA biosynthesis; selenocysteinyl-tRNA(Sec) biosynthesis; L-seryl-tRNA(Sec) from L-serine and tRNA(Sec): step 1/1. Functionally, catalyzes the attachment of serine to tRNA(Ser). Is also able to aminoacylate tRNA(Sec) with serine, to form the misacylated tRNA L-seryl-tRNA(Sec), which will be further converted into selenocysteinyl-tRNA(Sec). In Carboxydothermus hydrogenoformans (strain ATCC BAA-161 / DSM 6008 / Z-2901), this protein is Serine--tRNA ligase.